The chain runs to 545 residues: Pectinesterase/pectinesterase inhibitor (545 aa).

Residues 1-37 (MEINQPNLLEASKSCYSKITFFLLVISFAALVSTGFS) form the signal peptide. The tract at residues 38–191 (SPELSLHHKI…ILRARTSLAI (154 aa)) is pectinesterase inhibitor. The propeptide occupies 38-228 (SPELSLHHKI…RRLLQTLGKD (191 aa)). N-linked (GlcNAc...) asparagine glycosylation is present at Asn135. A pectinesterase region spans residues 232–530 (DIVVAKDGSG…TVAELIQGGS (299 aa)). Residues Thr307 and Gln337 each contribute to the substrate site. Cys326 and Cys353 are joined by a disulfide. Asp360 (proton donor; for pectinesterase activity) is an active-site residue. N-linked (GlcNAc...) (complex) asparagine glycosylation occurs at Asn375. Catalysis depends on Asp381, which acts as the Nucleophile; for pectinesterase activity. Cys394 and Cys428 are oxidised to a cystine. Substrate-binding residues include Arg449 and Trp451.

It in the N-terminal section; belongs to the PMEI family. In the C-terminal section; belongs to the pectinesterase family. N-glycosylated.

It localises to the secreted. It is found in the cell wall. It carries out the reaction [(1-&gt;4)-alpha-D-galacturonosyl methyl ester](n) + n H2O = [(1-&gt;4)-alpha-D-galacturonosyl](n) + n methanol + n H(+). It functions in the pathway glycan metabolism; pectin degradation; 2-dehydro-3-deoxy-D-gluconate from pectin: step 1/5. Functionally, acts in the modification of cell walls via demethylesterification of cell wall pectin. The chain is Pectinesterase/pectinesterase inhibitor from Ficus pumila var. awkeotsang (Jelly fig).